The sequence spans 233 residues: Ribonuclease HII (233 aa).

Positions lysine 21–leucine 211 constitute an RNase H type-2 domain. Aspartate 27, glutamate 28, and aspartate 119 together coordinate a divalent metal cation.

It belongs to the RNase HII family. Mn(2+) serves as cofactor. Mg(2+) is required as a cofactor.

The protein resides in the cytoplasm. The enzyme catalyses Endonucleolytic cleavage to 5'-phosphomonoester.. Functionally, endonuclease that specifically degrades the RNA of RNA-DNA hybrids. The chain is Ribonuclease HII (rnhB) from Streptomyces coelicolor (strain ATCC BAA-471 / A3(2) / M145).